We begin with the raw amino-acid sequence, 38 residues long: Toxin Bcg III 31.16 (38 aa).

Disulfide bonds link Cys4–Cys37, Cys6–Cys30, and Cys20–Cys38.

This sequence belongs to the sea anemone type 3 (BDS) potassium channel toxin family.

It is found in the secreted. Its subcellular location is the nematocyst. Its function is as follows. Possible modulator of crustacean voltage-gated sodium channels (Nav). The polypeptide is Toxin Bcg III 31.16 (Bunodosoma cangicum (Sea anemone)).